Reading from the N-terminus, the 591-residue chain is MKDHIKQKLTVLPDQPGCYLMKDRQGTIIYVGKAKVLKNRVRSYFTGSHDAKTQRLVGEIADFEYIVTSSNIEALILEMNLIKKHDPKYNVMLKDDKSYPYLKLTNEEHPRLVTTRKLKKDGGKYFGPYPNAGAANETKKLLDRLYPLRKCRTLPDKVCLYYHIGQCLAPCVYEVTPEQNEQMVQEITRFLKYGHKEVKVELEKKMHKAAEELNFERAKELRDTLGYMEAVMEKQTMMVNDRVDRDVFGYAYDKGWMCVQVFFVRQGKLIERDVSIFPFYKEAEEDFLTFIGQFYLQKDHIKPGEVLLPAGTDAALVEQLLDVSVHIPKRGKKKELVDVAMRNATMALKEKFALIERNEERTIKAVEQLGEAMGIPTPYRIEAFDNSNIQGTDPVSAMVAFIDGKPNKKEYRKYKIKTVTGPDDYESMREVVRRRYVRLLKEQRSLPDLIVIDGGKGQIAAAQEILHDELGLSIPVCGLAKDEKHRTSQLLLGDPPQVVPLKRDSHEFYLLQRIQDEVHRFALTFHRQTRSKTFFQSVLDDVPGIGEKRKRQLLKHFGSVKKMKEASIDDFLALSIPKSVAETLYNKLQTK.

A GIY-YIG domain is found at 14 to 91 (DQPGCYLMKD…IKKHDPKYNV (78 aa)). In terms of domain architecture, UVR spans 196-231 (KEVKVELEKKMHKAAEELNFERAKELRDTLGYMEAV).

Belongs to the UvrC family. Interacts with UvrB in an incision complex.

The protein localises to the cytoplasm. In terms of biological role, the UvrABC repair system catalyzes the recognition and processing of DNA lesions. UvrC both incises the 5' and 3' sides of the lesion. The N-terminal half is responsible for the 3' incision and the C-terminal half is responsible for the 5' incision. In Halalkalibacterium halodurans (strain ATCC BAA-125 / DSM 18197 / FERM 7344 / JCM 9153 / C-125) (Bacillus halodurans), this protein is UvrABC system protein C.